The sequence spans 294 residues: Store-operated calcium entry regulator STIMATE (294 aa).

The interval 1–22 (MQGPAGNASRGLPGGPPSTVAS) is disordered. The Cytoplasmic portion of the chain corresponds to 1–28 (MQGPAGNASRGLPGGPPSTVASGAGRCE). Transmembrane regions (helical) follow at residues 29 to 49 (SGAL…VVAF), 69 to 89 (IWFL…FANV), and 102 to 122 (LYLI…YVGV). The short motif at 149–153 (GAWVG) is the GXXXG motif element. Transmembrane regions (helical) follow at residues 156–176 (ALYI…LLIL) and 194–214 (LAIV…WVVD). Topologically, residues 215–294 (NFLMRKGKTK…KKKHRFGLPV (80 aa)) are cytoplasmic. The disordered stretch occupies residues 227–268 (LEERGANQDSRNGSKVRYRRAASHEESESEILISADDEMEES). The interval 241 to 246 (KVRYRR) is required for localization in the endoplasmic reticulum.

This sequence belongs to the STIMATE family. Homooligomer. Interacts with STIM1. As to expression, widely expressed.

Its subcellular location is the endoplasmic reticulum membrane. Its function is as follows. Acts as a regulator of store-operated Ca(2+) entry (SOCE) at junctional sites that connect the endoplasmic reticulum (ER) and plasma membrane (PM), called ER-plasma membrane (ER-PM) junction or cortical ER. SOCE is a Ca(2+) influx following depletion of intracellular Ca(2+) stores. Acts by interacting with STIM1, promoting STIM1 conformational switch. Involved in STIM1 relocalization to ER-PM junctions. Contributes to the maintenance and reorganization of store-dependent ER-PM junctions. In Homo sapiens (Human), this protein is Store-operated calcium entry regulator STIMATE.